Consider the following 193-residue polypeptide: MLHLLVGLGNPGKEYELTRHNVGFMIIDAIMHHFLFPDFKKKHNALISSGSIRSHKVILAKPYTFMNNSGTPISSIVKLYKIPLDNIIVFHDETDIDFCTIRIKKGGGNAGHNGLKSIDTLLGRDYWRIRFGIGHPSNGYDLSYHVLSQFNNLNAVNNTISNIIEHISLLFENDKSIFKNKVKDLIKYTDISS.

TRNA is bound at residue Y15. The active-site Proton acceptor is the H20. The tRNA site is built by F65, N67, and N113.

Belongs to the PTH family. In terms of assembly, monomer.

It is found in the cytoplasm. It carries out the reaction an N-acyl-L-alpha-aminoacyl-tRNA + H2O = an N-acyl-L-amino acid + a tRNA + H(+). Functionally, hydrolyzes ribosome-free peptidyl-tRNAs (with 1 or more amino acids incorporated), which drop off the ribosome during protein synthesis, or as a result of ribosome stalling. Its function is as follows. Catalyzes the release of premature peptidyl moieties from peptidyl-tRNA molecules trapped in stalled 50S ribosomal subunits, and thus maintains levels of free tRNAs and 50S ribosomes. In Ehrlichia ruminantium (strain Welgevonden), this protein is Peptidyl-tRNA hydrolase.